The sequence spans 194 residues: Translationally-controlled tumor protein homolog 2 (194 aa).

The TCTP domain maps to 1-194; it reads MKLYKDLIGN…IKYGLLQVDV (194 aa).

This sequence belongs to the TCTP family.

It is found in the cytoplasm. Involved in calcium binding and microtubule stabilization. The chain is Translationally-controlled tumor protein homolog 2 from Dictyostelium discoideum (Social amoeba).